A 257-amino-acid polypeptide reads, in one-letter code: uncharacterized protein (257 aa).

Asparagine 61, asparagine 95, asparagine 102, asparagine 111, asparagine 139, asparagine 148, and asparagine 152 each carry an N-linked (GlcNAc...) asparagine; by host glycan. The chain crosses the membrane as a helical span at residues 233-253 (WYIIGGIFWVIVLIILVIFII).

It localises to the host membrane. The protein localises to the virion. This is an uncharacterized protein from Acanthamoeba polyphaga (Amoeba).